Consider the following 371-residue polypeptide: RNA polymerase sigma factor SigA (371 aa).

The sigma-70 factor domain-2 stretch occupies residues leucine 137 to threonine 207. The short motif at aspartate 161 to glutamine 164 is the Interaction with polymerase core subunit RpoC element. Positions glutamate 216–tyrosine 292 are sigma-70 factor domain-3. The interval valine 305 to histidine 358 is sigma-70 factor domain-4. A DNA-binding region (H-T-H motif) is located at residues leucine 331–alanine 350.

The protein belongs to the sigma-70 factor family. RpoD/SigA subfamily. In terms of assembly, interacts transiently with the RNA polymerase catalytic core.

It is found in the cytoplasm. In terms of biological role, sigma factors are initiation factors that promote the attachment of RNA polymerase to specific initiation sites and are then released. This sigma factor is the primary sigma factor during exponential growth. This chain is RNA polymerase sigma factor SigA, found in Streptococcus mutans serotype c (strain ATCC 700610 / UA159).